A 134-amino-acid chain; its full sequence is uncharacterized protein (134 aa).

This is an uncharacterized protein from Thermoproteus tenax virus 1 (strain KRA1) (TTV1).